Here is a 240-residue protein sequence, read N- to C-terminus: Insulin-like growth factor-binding protein 3 receptor (240 aa).

The N-terminal stretch at 1 to 38 is a signal peptide; the sequence is MGSCQAGHNLHLCLAHHPPLVCATLILLLLGLSGLGLG. The Extracellular portion of the chain corresponds to 39 to 204; that stretch reads GFLLTHTTGL…SEELALCGSR (166 aa). Asparagine 167 carries N-linked (GlcNAc...) asparagine glycosylation. The helical transmembrane segment at 205–225 threads the bilayer; that stretch reads VLGLGFFLVLLCGLLCCTTAV. Residues 226 to 240 lie on the Cytoplasmic side of the membrane; sequence CFHPRPEFHWSRTRL.

In terms of assembly, interacts with IGFBP3. Interacts with CASP8.

The protein resides in the cell membrane. In terms of biological role, cell death receptor specific for IGFBP3, may mediate caspase-8-dependent apoptosis upon ligand binding. This Mus musculus (Mouse) protein is Insulin-like growth factor-binding protein 3 receptor (Tmem219).